Reading from the N-terminus, the 548-residue chain is MKDNWMKYKDDSLVASFYDSQTTTFQEQGFETELAFGTAGIRGQFGLGPGRLNRYTIQRLALGIANYLKDKEDNPSIVIHYDIRHLSSEFAHIITQILTSKGIKVYLADVYKTTPQLSFAVRYLQTSAGIMITASHNPKDYNGIKVYGADGAQLDEDTSLEVAQYINNLGNPLELNIDLNQELIEKNTFDLQEAVYDSYINEITNLIGDIPQSDLKVVYTSLHGTGVPIIPDVLKHLNFQNVSLVELQCELDPNFSSVKSANPEEREAFDLAIQQAHDLEANLIIATDPDVDRMGFVERDTNGQTYYFGGSEIGALLIKYLLEYTNVPNHSVVIQSIVSGELGKRLAQQHEVTVKEVLIGFKHIAKAIRELDDTESFLFAYEESYGYLADDFVRDKDAIQIVPLIIKYTSILKNEGKTLHDALKEIHREVGQYRDKPMSKVFEGREGQQQINALMDKLRRNIPDVIAGLKVIAVEDYETLKRNYKEDNTEEAISLPQANVIRILFKEGFIALRPSGTEPKLKFYLSLNVDNFEQVSQDIYNYIFGDTE.

The Phosphoserine intermediate role is filled by S135. Mg(2+) contacts are provided by S135, D288, D290, and D292.

The protein belongs to the phosphohexose mutase family. Mg(2+) serves as cofactor.

The enzyme catalyses alpha-D-glucose 1-phosphate = alpha-D-glucose 6-phosphate. It participates in glycolipid metabolism; diglucosyl-diacylglycerol biosynthesis. Catalyzes the interconversion between glucose-6-phosphate and alpha-glucose-1-phosphate. This is the first step in the biosynthesis of diglucosyl-diacylglycerol (Glc2-DAG), i.e. a glycolipid found in the membrane, which is also used as a membrane anchor for lipoteichoic acid (LTA). The polypeptide is Phosphoglucomutase (pgcA) (Staphylococcus haemolyticus (strain JCSC1435)).